A 301-amino-acid polypeptide reads, in one-letter code: Mating type protein mtA-1 (301 aa).

The segment at residues Ala49–Arg104 is a DNA-binding region (alpha box).

The protein belongs to the MATALPHA1 family.

Its subcellular location is the nucleus. Its function is as follows. Mating type proteins are sequence specific DNA-binding proteins that act as master switches in fungal differentiation by controlling gene expression in a cell type-specific fashion. Transcriptional activator that induces the transcription of alpha-specific genes. The sequence is that of Mating type protein mtA-1 (MTA1) from Sordaria fimicola.